A 119-amino-acid polypeptide reads, in one-letter code: Large ribosomal subunit protein bL20 (119 aa).

Belongs to the bacterial ribosomal protein bL20 family.

In terms of biological role, binds directly to 23S ribosomal RNA and is necessary for the in vitro assembly process of the 50S ribosomal subunit. It is not involved in the protein synthesizing functions of that subunit. This is Large ribosomal subunit protein bL20 from Clostridium tetani (strain Massachusetts / E88).